Reading from the N-terminus, the 375-residue chain is 4-hydroxy-3-methylbut-2-en-1-yl diphosphate synthase (flavodoxin) (375 aa).

Cysteine 268, cysteine 271, cysteine 303, and glutamate 310 together coordinate [4Fe-4S] cluster.

This sequence belongs to the IspG family. Requires [4Fe-4S] cluster as cofactor.

It catalyses the reaction (2E)-4-hydroxy-3-methylbut-2-enyl diphosphate + oxidized [flavodoxin] + H2O + 2 H(+) = 2-C-methyl-D-erythritol 2,4-cyclic diphosphate + reduced [flavodoxin]. It functions in the pathway isoprenoid biosynthesis; isopentenyl diphosphate biosynthesis via DXP pathway; isopentenyl diphosphate from 1-deoxy-D-xylulose 5-phosphate: step 5/6. In terms of biological role, converts 2C-methyl-D-erythritol 2,4-cyclodiphosphate (ME-2,4cPP) into 1-hydroxy-2-methyl-2-(E)-butenyl 4-diphosphate. The protein is 4-hydroxy-3-methylbut-2-en-1-yl diphosphate synthase (flavodoxin) of Bacillus velezensis (strain DSM 23117 / BGSC 10A6 / LMG 26770 / FZB42) (Bacillus amyloliquefaciens subsp. plantarum).